A 292-amino-acid chain; its full sequence is Bifunctional protein FolD (292 aa).

NADP(+)-binding positions include 171–173 (GAS), I196, and I237.

The protein belongs to the tetrahydrofolate dehydrogenase/cyclohydrolase family. As to quaternary structure, homodimer.

It catalyses the reaction (6R)-5,10-methylene-5,6,7,8-tetrahydrofolate + NADP(+) = (6R)-5,10-methenyltetrahydrofolate + NADPH. It carries out the reaction (6R)-5,10-methenyltetrahydrofolate + H2O = (6R)-10-formyltetrahydrofolate + H(+). Its pathway is one-carbon metabolism; tetrahydrofolate interconversion. In terms of biological role, catalyzes the oxidation of 5,10-methylenetetrahydrofolate to 5,10-methenyltetrahydrofolate and then the hydrolysis of 5,10-methenyltetrahydrofolate to 10-formyltetrahydrofolate. This is Bifunctional protein FolD from Helicobacter acinonychis (strain Sheeba).